The primary structure comprises 472 residues: Carboxypeptidase E (472 aa).

The signal sequence occupies residues methionine 1–alanine 21. The Peptidase M14 domain maps to histidine 39 to serine 359. Zn(2+) contacts are provided by histidine 101 and glutamate 104. An N-linked (GlcNAc...) asparagine glycan is attached at asparagine 134. Histidine 232 provides a ligand contact to Zn(2+). Catalysis depends on glutamate 329, which acts as the Proton donor/acceptor. 2 N-linked (GlcNAc...) asparagine glycosylation sites follow: asparagine 385 and asparagine 428.

It belongs to the peptidase M14 family. The cofactor is Zn(2+). In terms of tissue distribution, expression is restricted to the nervous system.

It localises to the cell projection. Its subcellular location is the axon. The protein resides in the perikaryon. It is found in the cytoplasmic vesicle. The protein localises to the secretory vesicle lumen. The catalysed reaction is Release of C-terminal arginine or lysine residues from polypeptides.. In terms of biological role, during FMRFamide-like peptide (FaRPs or FLP) and neuropeptide-like protein (NLP) precursor processing, catalyzes the removal of Arg or Lys residues from the C-terminus following the initial endoprotease cleavage. By processing neuropeptides, modulates basal acetylcholine release at the ventral cord neuromuscular junctions. Involved in egg-laying, defecation and locomotion. By processing FLP neuropeptides, regulates the turning step of male mating behavior. Involved in reducing pharyngeal pumping in response to high CO(2) levels. This is Carboxypeptidase E from Caenorhabditis elegans.